The primary structure comprises 384 residues: Substance-K receptor (384 aa).

The Extracellular segment spans residues M1 to Q32. Residues N11 and N19 are each glycosylated (N-linked (GlcNAc...) asparagine). A helical transmembrane segment spans residues L33–W56. Topologically, residues I57 to N69 are cytoplasmic. Residues Y70–N90 form a helical membrane-spanning segment. The Extracellular segment spans residues F91–Y107. The cysteines at positions 106 and 181 are disulfide-linked. The chain crosses the membrane as a helical span at residues F108–A129. Residues D130–R149 are Cytoplasmic-facing. The helical transmembrane segment at A150–S170 threads the bilayer. The Extracellular portion of the chain corresponds to T171–L196. A helical membrane pass occupies residues Y197–S218. Residues V219 to T251 are Cytoplasmic-facing. Residues M252–L272 traverse the membrane as a helical segment. Over G273–L290 the chain is Extracellular. The helical transmembrane segment at A291–L310 threads the bilayer. Over N311–P384 the chain is Cytoplasmic. C324 carries the S-palmitoyl cysteine lipid modification.

The protein belongs to the G-protein coupled receptor 1 family.

The protein localises to the cell membrane. Its function is as follows. This is a receptor for the tachykinin neuropeptide substance K (neurokinin A). It is associated with G proteins that activate a phosphatidylinositol-calcium second messenger system. The rank order of affinity of this receptor to tachykinins is: substance K &gt; neuromedin-K &gt; substance P. This is Substance-K receptor (TACR2) from Bos taurus (Bovine).